Reading from the N-terminus, the 282-residue chain is tRNA (guanine-N(7)-)-methyltransferase (282 aa).

The interval 1–31 is disordered; sequence MSLTDDQASKRQAYRAAKEANRKELKHVKID. Residues 16–31 show a composition bias toward basic and acidic residues; the sequence is AAKEANRKELKHVKID. S-adenosyl-L-methionine contacts are provided by residues glycine 99, 122-123, 157-158, and cysteine 177; these read EI and NA. Aspartate 180 is an active-site residue. 255–257 provides a ligand contact to S-adenosyl-L-methionine; it reads TEE.

The protein belongs to the class I-like SAM-binding methyltransferase superfamily. TrmB family. In terms of assembly, forms a complex with TRM82.

It localises to the nucleus. It carries out the reaction guanosine(46) in tRNA + S-adenosyl-L-methionine = N(7)-methylguanosine(46) in tRNA + S-adenosyl-L-homocysteine. It functions in the pathway tRNA modification; N(7)-methylguanine-tRNA biosynthesis. Catalyzes the formation of N(7)-methylguanine at position 46 (m7G46) in tRNA. The polypeptide is tRNA (guanine-N(7)-)-methyltransferase (Eremothecium gossypii (strain ATCC 10895 / CBS 109.51 / FGSC 9923 / NRRL Y-1056) (Yeast)).